Reading from the N-terminus, the 274-residue chain is NH(3)-dependent NAD(+) synthetase (274 aa).

46 to 53 (GISGGQDS) provides a ligand contact to ATP. Position 52 (aspartate 52) interacts with Mg(2+). Arginine 140 provides a ligand contact to deamido-NAD(+). Threonine 160 contributes to the ATP binding site. Glutamate 165 contacts Mg(2+). Deamido-NAD(+) is bound by residues lysine 173 and aspartate 180. The ATP site is built by lysine 189 and threonine 211. 260-261 (HK) provides a ligand contact to deamido-NAD(+).

This sequence belongs to the NAD synthetase family. Homodimer.

The enzyme catalyses deamido-NAD(+) + NH4(+) + ATP = AMP + diphosphate + NAD(+) + H(+). Its pathway is cofactor biosynthesis; NAD(+) biosynthesis; NAD(+) from deamido-NAD(+) (ammonia route): step 1/1. Catalyzes the ATP-dependent amidation of deamido-NAD to form NAD. Uses ammonia as a nitrogen source. The sequence is that of NH(3)-dependent NAD(+) synthetase from Nocardia farcinica (strain IFM 10152).